The chain runs to 202 residues: uncharacterized protein (202 aa).

Residues 14-74 enclose the HTH tetR-type domain; sequence NAKTERILDV…AMADRYFQRC (61 aa).

This is an uncharacterized protein from Xanthobacter autotrophicus.